Here is a 212-residue protein sequence, read N- to C-terminus: Bcl-2-related ovarian killer protein (212 aa).

Ser7 carries the phosphoserine modification. Residues 15 to 45 form an interactions with ITPR1 region; it reads MDAFDRSPTDKELVAQAKALGREYVHARLLR. Glycyl lysine isopeptide (Lys-Gly) (interchain with G-Cter in ubiquitin) cross-links involve residues Lys25 and Lys32. Positions 32 to 44 match the BH4 motif; it reads KALGREYVHARLL. The BH3 signature appears at 66-82; it reads VCAVLLRLGDELEMIRP. The tract at residues 70-78 is nuclear export signal; sequence LLRLGDELE. Residues 112-131 carry the BH1 motif; sequence HIFSAGITWGKVVSLYAVAA. Residues Lys159 and Lys176 each participate in a glycyl lysine isopeptide (Lys-Gly) (interchain with G-Cter in ubiquitin) cross-link. Positions 164–178 match the BH2 motif; it reads WLRRRGGWTDVLKCV. Residues 189–209 form a helical membrane-spanning segment; it reads WLVAALCSFGRFLKAAFFVLL.

This sequence belongs to the Bcl-2 family. In terms of assembly, monomer; positively regulates apoptotic process. Homodimer. Heterodimer. Oligomer; promoted by apoptotic stimuli and BH3-only proteins; mediates constitutive activation. Interacts (via BH4 domain) with ITPR1; enhances BOK expression and stabilization; limits apoptosis and prevents ubiquitination and then degradation; protects ITPR1 from proteolysis by CASP3 during apoptosis. Interacts with ITPR2 and ITPR3; binds most strongly to ITPR2, and barely to ITPR3; regulates their expression. Interacts with XPO1; translocates to the cytoplasm. Interacts with BNIP3; promotes oligomerization. Ubiquitinated by AMFR/gp78 E3 ubiquitin ligase complex; mediates degradation by ubiquitin-proteasome pathway in a VCP/p97-dependent manner; prevents from pro-apoptotic activity; promotes degradation of newly synthesized proteins that are not ITPR1 associated. As to expression, expressed mainly in oocytes; weak expression in granulosa cells of the developing follicles. In adult human ovaries, expressed in granulosa cells at all follicular stages, but expression in primordial/primary follicles granulosa cell is stronger than in secondary and antral follicles.

Its subcellular location is the mitochondrion membrane. It localises to the endoplasmic reticulum membrane. It is found in the mitochondrion inner membrane. The protein localises to the cytoplasm. The protein resides in the nucleus. Its subcellular location is the mitochondrion. It localises to the endoplasmic reticulum. It is found in the mitochondrion outer membrane. The protein localises to the early endosome membrane. The protein resides in the recycling endosome membrane. Its subcellular location is the nucleus outer membrane. It localises to the golgi apparatus. It is found in the cis-Golgi network membrane. The protein localises to the trans-Golgi network membrane. The protein resides in the membrane. In terms of biological role, apoptosis regulator that functions through different apoptotic signaling pathways. Plays a roles as pro-apoptotic protein that positively regulates intrinsic apoptotic process in a BAX- and BAK1-dependent manner or in a BAX- and BAK1-independent manner. In response to endoplasmic reticulum stress promotes mitochondrial apoptosis through downstream BAX/BAK1 activation and positive regulation of PERK-mediated unfolded protein response. Activates apoptosis independently of heterodimerization with survival-promoting BCL2 and BCL2L1 through induction of mitochondrial outer membrane permeabilization, in a BAX- and BAK1-independent manner, in response to inhibition of ERAD-proteasome degradation system, resulting in cytochrome c release. In response to DNA damage, mediates intrinsic apoptotic process in a TP53-dependent manner. Plays a role in granulosa cell apoptosis by CASP3 activation. Plays a roles as anti-apoptotic protein during neuronal apoptotic process, by negatively regulating poly ADP-ribose polymerase-dependent cell death through regulation of neuronal calcium homeostasis and mitochondrial bioenergetics in response to NMDA excitation. In addition to its role in apoptosis, may regulate trophoblast cell proliferation during the early stages of placental development, by acting on G1/S transition through regulation of CCNE1 expression. May also play a role as an inducer of autophagy by disrupting interaction between MCL1 and BECN1. Functionally, pro-apoptotic molecule exerting its function through the mitochondrial pathway. The chain is Bcl-2-related ovarian killer protein from Homo sapiens (Human).